A 347-amino-acid polypeptide reads, in one-letter code: Tetraacyldisaccharide 4'-kinase (347 aa).

65–72 (FVGGTGKT) provides a ligand contact to ATP.

It belongs to the LpxK family.

The enzyme catalyses a lipid A disaccharide + ATP = a lipid IVA + ADP + H(+). It functions in the pathway glycolipid biosynthesis; lipid IV(A) biosynthesis; lipid IV(A) from (3R)-3-hydroxytetradecanoyl-[acyl-carrier-protein] and UDP-N-acetyl-alpha-D-glucosamine: step 6/6. Functionally, transfers the gamma-phosphate of ATP to the 4'-position of a tetraacyldisaccharide 1-phosphate intermediate (termed DS-1-P) to form tetraacyldisaccharide 1,4'-bis-phosphate (lipid IVA). In Janthinobacterium sp. (strain Marseille) (Minibacterium massiliensis), this protein is Tetraacyldisaccharide 4'-kinase.